The following is a 1149-amino-acid chain: Bone sialoprotein-binding protein (1149 aa).

Residues M1–A52 form the signal peptide. Residues A53–K601 form a ligand binding A region region. 2 disordered regions span residues E54–T249 and L675–K697. Residues A61 to V75 are compositionally biased toward basic and acidic residues. Polar residues predominate over residues E77–T89. Positions I92 to E106 are enriched in basic and acidic residues. A compositionally biased stretch (low complexity) spans T109–T126. Positions N130–T145 are enriched in basic and acidic residues. Over residues P158–D205 the composition is skewed to polar residues. Over residues S216–T241 the composition is skewed to basic and acidic residues. CNA-B domains follow at residues L602–P714, K715–P824, and K825–T935. The tract at residues T896–N1124 is disordered. Acidic residues-rich tracts occupy residues T903 to E913 and Y930 to S1088. Residues L1112–G1116 carry the LPXTG sorting signal motif. Position 1115 is a pentaglycyl murein peptidoglycan amidated threonine (T1115). Residues G1116–K1149 constitute a propeptide, removed by sortase.

This sequence belongs to the serine-aspartate repeat-containing protein (SDr) family.

The protein localises to the secreted. Its subcellular location is the cell wall. In terms of biological role, specifically interacts with bone sialoprotein (BSP), a glycoprotein of bone and dentin extracellular matrix. Could contribute to staphylococcal osteomyelitis and arthritis. The polypeptide is Bone sialoprotein-binding protein (bbp) (Staphylococcus aureus).